We begin with the raw amino-acid sequence, 276 residues long: Phospholipid phosphatase 2 (276 aa).

Over 1 to 4 the chain is Cytoplasmic; that stretch reads MERR. Residues 5–25 traverse the membrane as a helical segment; sequence WVFVLLDVLCVLVASLPFIIL. The Lumenal segment spans residues 26–51; sequence TLVNAPYKRGFYCGDDSIRYPYRPDT. A helical transmembrane segment spans residues 52–72; sequence ITHGLMAGVIITATVILVSLG. Residues 73 to 87 are Cytoplasmic-facing; it reads EAYLVYTDRLYSRSN. A helical membrane pass occupies residues 88-108; the sequence is FNNYVAAIYKVLGTFLFGAAV. Over 109-161 the chain is Lumenal; that stretch reads SQSLTDLAKYMIGRLRPSFLAVCDPDWSQVNCSGYVQLEVCRGSPANVTEARL. The tract at residues 117-125 is phosphatase sequence motif I; that stretch reads KYMIGRLRP. Asn-139 and Asn-155 each carry an N-linked (GlcNAc...) asparagine glycan. A helical transmembrane segment spans residues 162-182; it reads SFYSGHSSFGMYCMLFLALYV. The interval 164 to 167 is phosphatase sequence motif II; sequence YSGH. The active-site Proton donors is His-167. Residues 183–189 lie on the Cytoplasmic side of the membrane; sequence QARLCWK. The helical transmembrane segment at 190–210 threads the bilayer; that stretch reads WARLLRPTVQFFLVAFAIYVG. Residues 211 to 218 are Lumenal-facing; that stretch reads YTRVSDHK. Residues 212–223 form a phosphatase sequence motif III region; sequence TRVSDHKHHWSD. His-219 functions as the Nucleophile in the catalytic mechanism. The helical transmembrane segment at 219 to 239 threads the bilayer; that stretch reads HHWSDVLVGLLQGALVACLTV. The Cytoplasmic portion of the chain corresponds to 240–276; sequence RYVSDFFKSRPPQPCQEDEVPERKPSLSLTLTLGDRP. The segment at 251–276 is disordered; that stretch reads PQPCQEDEVPERKPSLSLTLTLGDRP.

Belongs to the PA-phosphatase related phosphoesterase family. As to quaternary structure, forms functional homodimers and homooligomers. Can also form heterooligomers with PLPP1 and PLPP3. Post-translationally, N-glycosylated. As to expression, expressed at high levels in lung, liver and kidney; at low levels in heart and brain, and was not detected in skeletal muscle.

It is found in the membrane. Its subcellular location is the cell membrane. The protein resides in the early endosome membrane. It localises to the endoplasmic reticulum membrane. The catalysed reaction is a 1,2-diacyl-sn-glycero-3-phosphate + H2O = a 1,2-diacyl-sn-glycerol + phosphate. The enzyme catalyses 1,2-dihexadecanoyl-sn-glycero-3-phosphate + H2O = 1,2-dihexadecanoyl-sn-glycerol + phosphate. It catalyses the reaction 1,2-di-(9Z-octadecenoyl)-sn-glycero-3-phosphate + H2O = 1,2-di-(9Z-octadecenoyl)-sn-glycerol + phosphate. It carries out the reaction a monoacyl-sn-glycero-3-phosphate + H2O = a monoacylglycerol + phosphate. The catalysed reaction is (9Z)-octadecenoyl-sn-glycero-3-phosphate + H2O = (9Z-octadecenoyl)-glycerol + phosphate. The enzyme catalyses sphing-4-enine 1-phosphate + H2O = sphing-4-enine + phosphate. It catalyses the reaction an N-acylsphing-4-enine 1-phosphate + H2O = an N-acylsphing-4-enine + phosphate. It carries out the reaction N-(octanoyl)-sphing-4-enine-1-phosphate + H2O = N-octanoylsphing-4-enine + phosphate. The catalysed reaction is N-(9Z-octadecenoyl)-ethanolamine phosphate + H2O = N-(9Z-octadecenoyl) ethanolamine + phosphate. It participates in lipid metabolism; phospholipid metabolism. Magnesium-independent phospholipid phosphatase. Insensitive to N-ethylmaleimide. Magnesium-independent phospholipid phosphatase that catalyzes the dephosphorylation of a variety of glycerolipid and sphingolipid phosphate esters including phosphatidate/PA, lysophosphatidate/LPA, sphingosine 1-phosphate/S1P and ceramide 1-phosphate/C1P. Has no apparent extracellular phosphatase activity and therefore most probably acts intracellularly. Also acts on N-oleoyl ethanolamine phosphate/N-(9Z-octadecenoyl)-ethanolamine phosphate, a potential physiological compound. Through dephosphorylation of these bioactive lipid mediators produces new bioactive compounds and may regulate signal transduction in different cellular processes. Indirectly regulates, for instance, cell cycle G1/S phase transition through its phospholipid phosphatase activity. The polypeptide is Phospholipid phosphatase 2 (Mus musculus (Mouse)).